A 447-amino-acid polypeptide reads, in one-letter code: N-succinylarginine dihydrolase (447 aa).

Substrate is bound by residues A19 to S28, N110, and H137 to R138. E174 is an active-site residue. R213 serves as a coordination point for substrate. The active site involves H249. Residues D251 and N364 each coordinate substrate. C370 (nucleophile) is an active-site residue.

This sequence belongs to the succinylarginine dihydrolase family. Homodimer.

It catalyses the reaction N(2)-succinyl-L-arginine + 2 H2O + 2 H(+) = N(2)-succinyl-L-ornithine + 2 NH4(+) + CO2. It functions in the pathway amino-acid degradation; L-arginine degradation via AST pathway; L-glutamate and succinate from L-arginine: step 2/5. Functionally, catalyzes the hydrolysis of N(2)-succinylarginine into N(2)-succinylornithine, ammonia and CO(2). This Yersinia enterocolitica serotype O:8 / biotype 1B (strain NCTC 13174 / 8081) protein is N-succinylarginine dihydrolase.